The sequence spans 470 residues: Cysteine--tRNA ligase (470 aa).

Cys-27 serves as a coordination point for Zn(2+). The 'HIGH' region motif lies at Pro-29–Asn-39. Zn(2+)-binding residues include Cys-207, His-232, and Glu-236. The 'KMSKS' region signature appears at Lys-264–Ser-268. An ATP-binding site is contributed by Lys-267.

Belongs to the class-I aminoacyl-tRNA synthetase family. As to quaternary structure, monomer. Zn(2+) serves as cofactor.

The protein localises to the cytoplasm. It catalyses the reaction tRNA(Cys) + L-cysteine + ATP = L-cysteinyl-tRNA(Cys) + AMP + diphosphate. The protein is Cysteine--tRNA ligase of Lachnoclostridium phytofermentans (strain ATCC 700394 / DSM 18823 / ISDg) (Clostridium phytofermentans).